A 1007-amino-acid polypeptide reads, in one-letter code: Kinesin-like protein KIN-7D, chloroplastic (1007 aa).

The transit peptide at 1 to 53 directs the protein to the chloroplast; sequence MATRPASRQRRASSAAAAVAVVRSSPQPQQQQQQQLPIPQSGSPTSTTTTTTS. Residues 1-55 show a composition bias toward low complexity; that stretch reads MATRPASRQRRASSAAAAVAVVRSSPQPQQQQQQQLPIPQSGSPTSTTTTTTSSS. Positions 1-79 are disordered; the sequence is MATRPASRQR…LFAGLDEDPA (79 aa). One can recognise a Kinesin motor domain in the interval 83-402; it reads NVTVTVRFRP…LKFAHRAKRI (320 aa). 163–170 is a binding site for ATP; it reads GVTSSGKT. Residues 403–495 are a coiled coil; the sequence is EVQASQNKII…QRLTKLILVS (93 aa). Residues 579 to 607 are disordered; that stretch reads ILTSSEGDKSSLTKSTAPSTPIGESVNFP. Coiled coils occupy residues 687-716, 754-791, and 836-907; these read NNEKIQMEMKKVNDEIKGKKHQIASLERQI, AADNRVIQDQLNEKTTECMELQEEVAHLKEQLYQTLQA, and SVEI…SVRS. The disordered stretch occupies residues 901–941; it reads ELASVRSPTPRRANSGLRGTRRDSISRRHEPAPRRDNNAGY. A compositionally biased stretch (basic and acidic residues) spans 920 to 941; it reads TRRDSISRRHEPAPRRDNNAGY. Residues 942-982 are a coiled coil; the sequence is EREKALEAVLMEKEQKEAELQRRIEESKQKEAFLESELANM.

This sequence belongs to the TRAFAC class myosin-kinesin ATPase superfamily. Kinesin family. KIN-7 subfamily. In terms of assembly, binds microtubules. Homodimer. Requires Mg(2+) as cofactor.

Its subcellular location is the plastid. It localises to the chloroplast. Probable minus end-directed motor protein with a microtubule-enhanced ATPase activity. Binds ATP/ADP in vitro. Retains total enzymatic activity even after the removal of the ADP bound in the active site. The chain is Kinesin-like protein KIN-7D, chloroplastic from Oryza sativa subsp. japonica (Rice).